Reading from the N-terminus, the 292-residue chain is 33 kDa chaperonin (292 aa).

2 cysteine pairs are disulfide-bonded: Cys-230–Cys-232 and Cys-263–Cys-266.

It belongs to the HSP33 family. In terms of processing, under oxidizing conditions two disulfide bonds are formed involving the reactive cysteines. Under reducing conditions zinc is bound to the reactive cysteines and the protein is inactive.

It is found in the cytoplasm. Its function is as follows. Redox regulated molecular chaperone. Protects both thermally unfolding and oxidatively damaged proteins from irreversible aggregation. Plays an important role in the bacterial defense system toward oxidative stress. This is 33 kDa chaperonin from Salmonella typhi.